A 208-amino-acid chain; its full sequence is Cysteine-rich protein 2 (208 aa).

In terms of domain architecture, LIM zinc-binding 1 spans cysteine 5 to cysteine 57. Residue lysine 23 is modified to N6-acetyllysine. The tract at residues alanine 98 to phenylalanine 119 is disordered. The residue at position 104 (serine 104) is a Phosphoserine. An LIM zinc-binding 2 domain is found at cysteine 126–cysteine 178. An N6-acetyllysine mark is found at lysine 138 and lysine 144.

As to quaternary structure, interacts with TGFB1I1. As to expression, widespread tissue expression; highest levels in the heart.

This Homo sapiens (Human) protein is Cysteine-rich protein 2 (CRIP2).